The sequence spans 893 residues: Serine/threonine-protein kinase/endoribonuclease IRE1 (893 aa).

Positions 1-19 (MRSLRRVLLQLVLLAGVAF) are cleaved as a signal peptide. The Lumenal segment spans residues 20–379 (RGVRFDDAAD…NSVTKFSYRW (360 aa)). Residues N105, N158, N259, and N351 are each glycosylated (N-linked (GlcNAc...) asparagine). Residues 380-397 (LFPTFLMLLIMACLVKLA) form a helical membrane-spanning segment. Topologically, residues 398–893 (DASKYCRQFV…FSKYFLGSSA (496 aa)) are cytoplasmic. Positions 451 to 478 (ASDKEGNGTGGSTEAQSNKAHDSTNVEL) are disordered. The Protein kinase domain occupies 491 to 759 (CVYSKEIGKG…AVYVMHHPFF (269 aa)). ATP-binding positions include 497 to 505 (IGKGSNGTV) and K519. The active-site Proton acceptor is the D625. Residues 762-890 (PELCLSFLRD…EEAFSKYFLG (129 aa)) enclose the KEN domain.

The protein belongs to the protein kinase superfamily. Ser/Thr protein kinase family. In terms of assembly, homodimer; disulfide-linked. Dimer formation is driven by hydrophobic interactions within the N-terminal luminal domains and stabilized by disulfide bridges. In terms of processing, autophosphorylated. In terms of tissue distribution, expressed in roots, nodes, internodes, leaf sheaths, leaf blades, young ears and mature ears.

It is found in the endoplasmic reticulum membrane. The catalysed reaction is L-seryl-[protein] + ATP = O-phospho-L-seryl-[protein] + ADP + H(+). The enzyme catalyses L-threonyl-[protein] + ATP = O-phospho-L-threonyl-[protein] + ADP + H(+). Involved in endoplasmic reticulum (ER) stress response. Senses unfolded proteins in the lumen of the ER via its N-terminal domain which leads to enzyme auto-activation. The active endoribonuclease domain splices bZIP50 mRNA to generate a new C-terminus, converting it into a potent unfolded-protein response (UPR) transcriptional activator, which then induces transcription of UPR target genes, such as luminal-binding protein (BiP) chaperones. This Oryza sativa subsp. japonica (Rice) protein is Serine/threonine-protein kinase/endoribonuclease IRE1.